Reading from the N-terminus, the 176-residue chain is Small ribosomal subunit protein uS4 (176 aa).

The S4 RNA-binding domain maps to 103-165 (RRLQTIVYKK…PTSPYAKRRL (63 aa)).

It belongs to the universal ribosomal protein uS4 family. As to quaternary structure, part of the 30S ribosomal subunit. Contacts protein S5. The interaction surface between S4 and S5 is involved in control of translational fidelity.

Functionally, one of the primary rRNA binding proteins, it binds directly to 16S rRNA where it nucleates assembly of the body of the 30S subunit. In terms of biological role, with S5 and S12 plays an important role in translational accuracy. The sequence is that of Small ribosomal subunit protein uS4 from Hyperthermus butylicus (strain DSM 5456 / JCM 9403 / PLM1-5).